A 449-amino-acid polypeptide reads, in one-letter code: Methylenetetrahydrofolate--tRNA-(uracil-5-)-methyltransferase TrmFO (449 aa).

An FAD-binding site is contributed by 9–14; the sequence is GGGIAG.

This sequence belongs to the MnmG family. TrmFO subfamily. Requires FAD as cofactor.

Its subcellular location is the cytoplasm. It carries out the reaction uridine(54) in tRNA + (6R)-5,10-methylene-5,6,7,8-tetrahydrofolate + NADH + H(+) = 5-methyluridine(54) in tRNA + (6S)-5,6,7,8-tetrahydrofolate + NAD(+). The catalysed reaction is uridine(54) in tRNA + (6R)-5,10-methylene-5,6,7,8-tetrahydrofolate + NADPH + H(+) = 5-methyluridine(54) in tRNA + (6S)-5,6,7,8-tetrahydrofolate + NADP(+). Its function is as follows. Catalyzes the folate-dependent formation of 5-methyl-uridine at position 54 (M-5-U54) in all tRNAs. The chain is Methylenetetrahydrofolate--tRNA-(uracil-5-)-methyltransferase TrmFO from Gloeobacter violaceus (strain ATCC 29082 / PCC 7421).